Here is a 380-residue protein sequence, read N- to C-terminus: SAM and SH3 domain-containing protein 3 (380 aa).

Disordered stretches follow at residues 1–76 and 96–168; these read MLRR…GKKW and LSEE…SPAP. Residues 22 to 41 show a composition bias toward low complexity; that stretch reads LQRSSSFKDFAKSKPSSPVV. 3 positions are modified to phosphoserine: S27, S34, and S42. T61 is subject to Phosphothreonine. A Phosphoserine modification is found at S97. T103 carries the phosphothreonine modification. S110 bears the Phosphoserine mark. At T112 the chain carries Phosphothreonine. Phosphoserine is present on residues S113 and S120. Polar residues predominate over residues 141–150; the sequence is LSRQTSTGSE. Residues 173–234 enclose the SH3 domain; it reads PFCGRARVHT…KFIYVDVLPE (62 aa). The region spanning 252-316 is the SAM domain; sequence PKPKTLHELL…LTAAELLLDY (65 aa). Position 318 is a phosphothreonine (T318). Positions 318-327 are enriched in acidic residues; the sequence is TGSEEAEEGA. Residues 318-380 are disordered; that stretch reads TGSEEAEEGA…LQGLSLSGAP (63 aa). At S320 the chain carries Phosphoserine. A compositionally biased stretch (polar residues) spans 369 to 380; sequence EQLQGLSLSGAP.

In terms of tissue distribution, preferentially expressed in lymphoid tissues. Expressed in bone marrow, thymus, spleen, lymph nodes and Peyer patches of gut. In the spleen and lymph nodes, expressed in both T- and B-cells. In the thymus, in the medulla and cortex.

Its function is as follows. May function as a signaling adapter protein in lymphocytes. The sequence is that of SAM and SH3 domain-containing protein 3 (Sash3) from Mus musculus (Mouse).